Here is a 490-residue protein sequence, read N- to C-terminus: Myocilin (490 aa).

An N-terminal signal peptide occupies residues 1 to 18; sequence MPAVQLLLLAGLVWGAGA. Residues 55-170 are a coiled coil; the sequence is SAIQDLQRDS…QEVARLARGQ (116 aa). Residues 168-187 are disordered; sequence RGQCPQARDTSQDVPAGSRE. The Olfactomedin-like domain occupies 230–489; the sequence is GCGELVWVGQ…MVTYDIKLSK (260 aa). C231 and C419 are joined by a disulfide. Positions 366, 414, 415, 463, and 464 each coordinate Ca(2+). The Microbody targeting signal motif lies at 488-490; the sequence is SKI.

In terms of assembly, homodimer (via N-terminus). Can also form higher oligomers. Interacts with OLFM3, FN1, NRCAM, GLDN and NFASC. Interacts (via N-terminus) with MYL2. Interacts with SFRP1, FRZB, FZD7, FZD10, FZD1 and WIF1; regulates Wnt signaling. Interacts with SNTA1; regulates muscle hypertrophy. Interacts with ERBB2 and ERBB3; activates ERBB2-ERBB3 signaling pathway. Interacts with SNCG; affects its secretion and its aggregation. Palmitoylated. In terms of processing, glycosylated. Post-translationally, undergoes a calcium-dependent proteolytic cleavage at Arg-212 by CAPN2 in the endoplasmic reticulum. The result is the production of two fragments, one of 35 kDa containing the C-terminal olfactomedin-like domain, and another of 20 kDa containing the N-terminal leucine zipper-like domain. In terms of tissue distribution, detected in eye aqueous humor (at protein level).

Its subcellular location is the secreted. The protein resides in the golgi apparatus. The protein localises to the cytoplasmic vesicle. It is found in the extracellular space. It localises to the extracellular matrix. Its subcellular location is the extracellular exosome. The protein resides in the mitochondrion. The protein localises to the mitochondrion intermembrane space. It is found in the mitochondrion inner membrane. It localises to the mitochondrion outer membrane. Its subcellular location is the rough endoplasmic reticulum. The protein resides in the cell projection. The protein localises to the cilium. It is found in the endoplasmic reticulum. In terms of biological role, secreted glycoprotein regulating the activation of different signaling pathways in adjacent cells to control different processes including cell adhesion, cell-matrix adhesion, cytoskeleton organization and cell migration. Promotes substrate adhesion, spreading and formation of focal contacts. Negatively regulates cell-matrix adhesion and stress fiber assembly through Rho protein signal transduction. Modulates the organization of actin cytoskeleton by stimulating the formation of stress fibers through interactions with components of Wnt signaling pathways. Promotes cell migration through activation of PTK2 and the downstream phosphatidylinositol 3-kinase signaling. Plays a role in bone formation and promotes osteoblast differentiation in a dose-dependent manner through mitogen-activated protein kinase signaling. Mediates myelination in the peripheral nervous system through ERBB2/ERBB3 signaling. Plays a role as a regulator of muscle hypertrophy through the components of dystrophin-associated protein complex. Involved in positive regulation of mitochondrial depolarization. Plays a role in neurite outgrowth. May participate in the obstruction of fluid outflow in the trabecular meshwork. The chain is Myocilin from Oryctolagus cuniculus (Rabbit).